The sequence spans 396 residues: NADH-quinone oxidoreductase subunit D (396 aa).

The protein belongs to the complex I 49 kDa subunit family. In terms of assembly, NDH-1 is composed of 14 different subunits. Subunits NuoB, C, D, E, F, and G constitute the peripheral sector of the complex.

Its subcellular location is the cell inner membrane. The enzyme catalyses a quinone + NADH + 5 H(+)(in) = a quinol + NAD(+) + 4 H(+)(out). NDH-1 shuttles electrons from NADH, via FMN and iron-sulfur (Fe-S) centers, to quinones in the respiratory chain. The immediate electron acceptor for the enzyme in this species is believed to be ubiquinone. Couples the redox reaction to proton translocation (for every two electrons transferred, four hydrogen ions are translocated across the cytoplasmic membrane), and thus conserves the redox energy in a proton gradient. This Mesorhizobium japonicum (strain LMG 29417 / CECT 9101 / MAFF 303099) (Mesorhizobium loti (strain MAFF 303099)) protein is NADH-quinone oxidoreductase subunit D.